The following is a 296-amino-acid chain: Glycine--tRNA ligase alpha subunit (296 aa).

It belongs to the class-II aminoacyl-tRNA synthetase family. Tetramer of two alpha and two beta subunits.

The protein resides in the cytoplasm. The enzyme catalyses tRNA(Gly) + glycine + ATP = glycyl-tRNA(Gly) + AMP + diphosphate. This is Glycine--tRNA ligase alpha subunit from Prochlorococcus marinus (strain SARG / CCMP1375 / SS120).